Here is a 55-residue protein sequence, read N- to C-terminus: ATP synthase F(0) complex subunit 8 (55 aa).

A helical transmembrane segment spans residues 8-24 (PWFSIMVMTWLTLALLI). Positions 35-55 (NPPSKKPSLITKPTPWAWPWT) are disordered.

It belongs to the ATPase protein 8 family. In terms of assembly, component of the ATP synthase complex composed at least of ATP5F1A/subunit alpha, ATP5F1B/subunit beta, ATP5MC1/subunit c (homooctomer), MT-ATP6/subunit a, MT-ATP8/subunit 8, ATP5ME/subunit e, ATP5MF/subunit f, ATP5MG/subunit g, ATP5MK/subunit k, ATP5MJ/subunit j, ATP5F1C/subunit gamma, ATP5F1D/subunit delta, ATP5F1E/subunit epsilon, ATP5PF/subunit F6, ATP5PB/subunit b, ATP5PD/subunit d, ATP5PO/subunit OSCP. ATP synthase complex consists of a soluble F(1) head domain (subunits alpha(3) and beta(3)) - the catalytic core - and a membrane F(0) domain - the membrane proton channel (subunits c, a, 8, e, f, g, k and j). These two domains are linked by a central stalk (subunits gamma, delta, and epsilon) rotating inside the F1 region and a stationary peripheral stalk (subunits F6, b, d, and OSCP).

Its subcellular location is the mitochondrion membrane. Subunit 8, of the mitochondrial membrane ATP synthase complex (F(1)F(0) ATP synthase or Complex V) that produces ATP from ADP in the presence of a proton gradient across the membrane which is generated by electron transport complexes of the respiratory chain. ATP synthase complex consist of a soluble F(1) head domain - the catalytic core - and a membrane F(1) domain - the membrane proton channel. These two domains are linked by a central stalk rotating inside the F(1) region and a stationary peripheral stalk. During catalysis, ATP synthesis in the catalytic domain of F(1) is coupled via a rotary mechanism of the central stalk subunits to proton translocation. In vivo, can only synthesize ATP although its ATP hydrolase activity can be activated artificially in vitro. Part of the complex F(0) domain. In Anas platyrhynchos (Mallard), this protein is ATP synthase F(0) complex subunit 8.